The following is a 291-amino-acid chain: Ribosomal RNA small subunit methyltransferase A (291 aa).

Histidine 37, leucine 39, glycine 64, glutamate 85, aspartate 110, and asparagine 131 together coordinate S-adenosyl-L-methionine.

Belongs to the class I-like SAM-binding methyltransferase superfamily. rRNA adenine N(6)-methyltransferase family. RsmA subfamily.

Its subcellular location is the cytoplasm. It catalyses the reaction adenosine(1518)/adenosine(1519) in 16S rRNA + 4 S-adenosyl-L-methionine = N(6)-dimethyladenosine(1518)/N(6)-dimethyladenosine(1519) in 16S rRNA + 4 S-adenosyl-L-homocysteine + 4 H(+). Specifically dimethylates two adjacent adenosines (A1518 and A1519) in the loop of a conserved hairpin near the 3'-end of 16S rRNA in the 30S particle. May play a critical role in biogenesis of 30S subunits. The chain is Ribosomal RNA small subunit methyltransferase A from Dehalococcoides mccartyi (strain ATCC BAA-2100 / JCM 16839 / KCTC 5957 / BAV1).